The primary structure comprises 210 residues: Thymidylate kinase (210 aa).

13 to 20 (GLEGAGKS) contributes to the ATP binding site.

It belongs to the thymidylate kinase family.

The enzyme catalyses dTMP + ATP = dTDP + ADP. Functionally, phosphorylation of dTMP to form dTDP in both de novo and salvage pathways of dTTP synthesis. This chain is Thymidylate kinase, found in Shewanella loihica (strain ATCC BAA-1088 / PV-4).